Here is a 528-residue protein sequence, read N- to C-terminus: Phosphoenolpyruvate carboxykinase (ATP) (528 aa).

The substrate site is built by Arg56, Tyr192, and Lys198. ATP contacts are provided by residues Lys198, His217, and 233 to 241 (GLSGTGKTT). Residues Lys198 and His217 each coordinate Mn(2+). Asp254 lines the Mn(2+) pocket. Glu282, Arg319, and Thr444 together coordinate ATP. Residue Arg319 coordinates substrate.

It belongs to the phosphoenolpyruvate carboxykinase (ATP) family. Requires Mn(2+) as cofactor.

It localises to the cytoplasm. It carries out the reaction oxaloacetate + ATP = phosphoenolpyruvate + ADP + CO2. The protein operates within carbohydrate biosynthesis; gluconeogenesis. Involved in the gluconeogenesis. Catalyzes the conversion of oxaloacetate (OAA) to phosphoenolpyruvate (PEP) through direct phosphoryl transfer between the nucleoside triphosphate and OAA. The protein is Phosphoenolpyruvate carboxykinase (ATP) of Bacillus pumilus (strain SAFR-032).